The following is a 514-amino-acid chain: Transmembrane protein 117 (514 aa).

At 1-15 (MGKDFRYYFQHPWSR) the chain is on the cytoplasmic side. The helical transmembrane segment at 16 to 36 (MIVAYLVIFFNFLIFAEDPVS) threads the bilayer. Over 37 to 65 (HSQTEANVIVVGNCFSFVTNKYPRGVGWR) the chain is Extracellular. A helical membrane pass occupies residues 66–86 (ILKVLLWLLAILTGLIAGKFL). Residues 87–110 (FHQRLFGQLLRLKMFREDHGSWMT) are Cytoplasmic-facing. A helical transmembrane segment spans residues 111–131 (MFFSTILFLFIFSHIYNTILL). Residues 132-154 (MDGNMGAYIITDYMGIRNESFMK) lie on the Extracellular side of the membrane. Residues 155-175 (LAAVGTWMGDFVTAWMVTDMM) form a helical membrane-spanning segment. At 176–198 (LQDKPYPDWGKSARAFWKKGNVR) the chain is on the cytoplasmic side. A helical transmembrane segment spans residues 199 to 219 (ITLFWTVLFTLTSVVVLVITT). The Extracellular portion of the chain corresponds to 220–239 (DWISWDKLNRGFLPSDEVSR). The helical transmembrane segment at 240 to 260 (AFLASFILVFDLLIVMQDWEF) threads the bilayer. Residues 261–295 (PHFMGDVDVNLPGLHTPHMQFKIPFFQKIFKEEYR) lie on the Cytoplasmic side of the membrane. A helical membrane pass occupies residues 296–316 (IHITGKWFNYGIIFLVLILDL). Topologically, residues 317–394 (NMWKNQIFYK…FIGASLDVKC (78 aa)) are extracellular. N-linked (GlcNAc...) asparagine glycans are attached at residues asparagine 353 and asparagine 371. Residues 395 to 415 (LAFVPSLIAFVWFGFFIWFFG) traverse the membrane as a helical segment. The Cytoplasmic portion of the chain corresponds to 416–514 (RFLKNEPRME…PTTSKSTPTN (99 aa)). Disordered stretches follow at residues 429–459 (KTYT…SVED) and 486–514 (ENLS…TPTN). Residues 438-448 (SPSEHSKDMGI) show a composition bias toward basic and acidic residues. Threonine 453 bears the Phosphothreonine mark.

Belongs to the TMEM117 family.

Its subcellular location is the cell membrane. Its function is as follows. Involved in endoplasmic reticulum (ER) stress-induced cell death pathway. In Homo sapiens (Human), this protein is Transmembrane protein 117 (TMEM117).